Consider the following 527-residue polypeptide: MESLQKTSDAGQMFDVVVIGGGISGLSAAKLLAEHEVNVLVLEARERVGGRTYTVRNEHVDYVDVGGAYVGPTQNRILRLSKQLGLETYKVNVNERLVHYVKGKTYPFRGAFPPVWNPIAYLDYNNLWRTMDNMGKEIPADAPWEAPHAVEWDKMTMKDLIEKICWTKTARQFASLFVNINVTSEPHEVSALWFLWYVKQCGGTTRIFSITNGGQERKFVGGSGQVSERIMQLLGDRVKLRSPVTYVDQSSENITVETLNRELYECRYVISAIPPTLTAKIHFRPELPSERNQLIQRLPMGAVIKCMMYYKEAFWKKKDYCGCMIIEDEEAPISITLDDTKPDGSLPAIMGFILARKADRLAKVHKDIRKRKICELYAKVLGSQEALHPVHYEEKNWCQEQYSGGCYTAYFPPGIMTQYGRVIRQPVGRIYFAGTETATQWSGYMEGAVEAGERAAREVLNALGKLSAKDIWIQEPEAEDVPAVEITPSFWERNLPSVSGLLKIVGFSTSITALWFVMYRFRLLSRS.

M1 carries the N-acetylmethionine modification. Topologically, residues 1–497 are cytoplasmic; sequence MESLQKTSDA…PSFWERNLPS (497 aa). At S383 the chain carries Phosphoserine. Residue C406 is modified to S-8alpha-FAD cysteine. The helical; Anchor for type IV membrane protein transmembrane segment at 498-518 threads the bilayer; sequence VSGLLKIVGFSTSITALWFVM. The Mitochondrial intermembrane segment spans residues 519–527; that stretch reads YRFRLLSRS. Positions 520–522 are interaction with membrane phospholipid headgroups; sequence RFR.

It belongs to the flavin monoamine oxidase family. As to quaternary structure, monomer, homo- or heterodimer (containing two subunits of similar size). Each subunit contains a covalently bound flavin. Enzymatically active as monomer. FAD is required as a cofactor.

It is found in the mitochondrion outer membrane. It catalyses the reaction a secondary aliphatic amine + O2 + H2O = a primary amine + an aldehyde + H2O2. It carries out the reaction a primary methyl amine + O2 + H2O = an aldehyde + H2O2 + NH4(+). The catalysed reaction is (R)-adrenaline + O2 + H2O = (R)-3,4-dihydroxymandelaldehyde + methylamine + H2O2. The enzyme catalyses dopamine + O2 + H2O = 3,4-dihydroxyphenylacetaldehyde + H2O2 + NH4(+). It catalyses the reaction tyramine + O2 + H2O = (4-hydroxyphenyl)acetaldehyde + H2O2 + NH4(+). It carries out the reaction (R)-noradrenaline + O2 + H2O = (R)-3,4-dihydroxymandelaldehyde + H2O2 + NH4(+). The catalysed reaction is serotonin + O2 + H2O = (5-hydroxyindol-3-yl)acetaldehyde + H2O2 + NH4(+). The enzyme catalyses kynuramine + O2 + H2O = 3-(2-aminophenyl)-3-oxopropanal + H2O2 + NH4(+). It catalyses the reaction tryptamine + O2 + H2O = indole-3-acetaldehyde + H2O2 + NH4(+). It carries out the reaction 2-phenylethylamine + O2 + H2O = 2-phenylacetaldehyde + H2O2 + NH4(+). Its function is as follows. Catalyzes the oxidative deamination of primary and some secondary amine such as neurotransmitters, with concomitant reduction of oxygen to hydrogen peroxide and has important functions in the metabolism of neuroactive and vasoactive amines in the central nervous system and peripheral tissues. Preferentially oxidizes serotonin. Also catalyzes the oxidative deamination of kynuramine to 3-(2-aminophenyl)-3-oxopropanal that can spontaneously condense to 4-hydroxyquinoline. The polypeptide is Amine oxidase [flavin-containing] A (Bos taurus (Bovine)).